Consider the following 437-residue polypeptide: Amino-acid acetyltransferase (437 aa).

Residues 289 to 429 (ENIRLATSFD…EHYNYQRMSK (141 aa)) enclose the N-acetyltransferase domain.

Belongs to the acetyltransferase family. ArgA subfamily.

Its subcellular location is the cytoplasm. It catalyses the reaction L-glutamate + acetyl-CoA = N-acetyl-L-glutamate + CoA + H(+). Its pathway is amino-acid biosynthesis; L-arginine biosynthesis; N(2)-acetyl-L-ornithine from L-glutamate: step 1/4. This chain is Amino-acid acetyltransferase, found in Actinobacillus pleuropneumoniae serotype 7 (strain AP76).